We begin with the raw amino-acid sequence, 145 residues long: MVKKVLLINGPNLNLLGTREPEKYGTTTLKDIEMEAHQQVAKHQDAELFTYQNNTEGFIIDRIQEAKQQGVGFIIINAGAYTHTSVGIRDALLGTAIPFIEVHITNVHQREPFRHHSYLSDKAIAVIAGLGVYGYTAAIEYALNY.

The active-site Proton acceptor is Tyr-24. Substrate is bound by residues Asn-77, His-83, and Asp-90. His-103 acts as the Proton donor in catalysis. Residues 104 to 105 (IT) and Arg-114 contribute to the substrate site.

The protein belongs to the type-II 3-dehydroquinase family. Homododecamer. Adopts a ring-like structure, composed of an arrangement of two hexameric rings stacked on top of one another.

It carries out the reaction 3-dehydroquinate = 3-dehydroshikimate + H2O. The protein operates within aromatic compound metabolism; 3,4-dihydroxybenzoate biosynthesis; 3,4-dihydroxybenzoate from 3-dehydroquinate: step 1/2. Is involved in the catabolism of quinate. Allows the utilization of quinate as carbon source via the beta-ketoadipate pathway. The protein is Catabolic 3-dehydroquinase of Clavispora lusitaniae (strain ATCC 42720) (Yeast).